The primary structure comprises 641 residues: Chaperone protein DnaK (641 aa).

A Phosphothreonine; by autocatalysis modification is found at threonine 199. The segment at 602–641 (MYADQADQAQQAGGQEEGQAKSADDAVDAEFEEVKDDDKK) is disordered. The segment covering 604–615 (ADQADQAQQAGG) has biased composition (low complexity). Acidic residues predominate over residues 626–641 (DAVDAEFEEVKDDDKK).

It belongs to the heat shock protein 70 family.

Its function is as follows. Acts as a chaperone. The polypeptide is Chaperone protein DnaK (Marinobacter nauticus (strain ATCC 700491 / DSM 11845 / VT8) (Marinobacter aquaeolei)).